A 442-amino-acid chain; its full sequence is Histidine--tRNA ligase (442 aa).

This sequence belongs to the class-II aminoacyl-tRNA synthetase family. As to quaternary structure, homodimer.

The protein localises to the cytoplasm. It carries out the reaction tRNA(His) + L-histidine + ATP = L-histidyl-tRNA(His) + AMP + diphosphate + H(+). This is Histidine--tRNA ligase (hisS) from Helicobacter pylori (strain J99 / ATCC 700824) (Campylobacter pylori J99).